A 253-amino-acid polypeptide reads, in one-letter code: ABC transporter D-alanine-binding periplasmic protein (253 aa).

The N-terminal stretch at 1–22 is a signal peptide; that stretch reads MLSKKFGLSMIVLGIMSSSAFA. Positions 95, 97, 102, 147, and 191 each coordinate D-alanine.

This sequence belongs to the bacterial solute-binding protein 3 family. In terms of assembly, monomer.

It localises to the periplasm. Its function is as follows. Part of the ABC transporter complex dalSTUV, that imports D-alanine into the cytoplasm. Helps protect the organism from oxidative killing by host neutrophils through sequestration of D-alanine, a substrate that is converted to hydrogen peroxide by the host enzyme DAO (D-amino acid oxidase). DalS shuttles D-alanine from the periplasm to the DalTUV complex situated in the inner membrane and through hydrolysis of ATP, D-alanine is transported across the membrane into the cytoplasm. Not required for the metabolism of D-alanine found in the stem peptide of peptidoglycan. The chain is ABC transporter D-alanine-binding periplasmic protein from Salmonella typhimurium (strain LT2 / SGSC1412 / ATCC 700720).